The chain runs to 502 residues: T-complex protein 11-like X-linked protein 2 (502 aa).

The disordered stretch occupies residues 1–36; sequence MPKTEETVLQNDPSVAENGAPEPKTPGQSQKSKSFC.

It belongs to the TCP11 family.

The protein is T-complex protein 11-like X-linked protein 2 of Homo sapiens (Human).